Reading from the N-terminus, the 334-residue chain is Glyceraldehyde-3-phosphate dehydrogenase (334 aa).

NAD(+) is bound by residues 11–12 (RI), aspartate 33, and serine 119. D-glyceraldehyde 3-phosphate contacts are provided by residues 149–151 (SCT) and threonine 180. Cysteine 150 serves as the catalytic Nucleophile. Asparagine 181 contacts NAD(+). D-glyceraldehyde 3-phosphate is bound by residues arginine 197, 210 to 211 (TG), and arginine 233. NAD(+) is bound at residue asparagine 314.

This sequence belongs to the glyceraldehyde-3-phosphate dehydrogenase family. As to quaternary structure, homotetramer.

The protein resides in the cytoplasm. It carries out the reaction D-glyceraldehyde 3-phosphate + phosphate + NAD(+) = (2R)-3-phospho-glyceroyl phosphate + NADH + H(+). The protein operates within carbohydrate degradation; glycolysis; pyruvate from D-glyceraldehyde 3-phosphate: step 1/5. In terms of biological role, catalyzes the oxidative phosphorylation of glyceraldehyde 3-phosphate (G3P) to 1,3-bisphosphoglycerate (BPG) using the cofactor NAD. The first reaction step involves the formation of a hemiacetal intermediate between G3P and a cysteine residue, and this hemiacetal intermediate is then oxidized to a thioester, with concomitant reduction of NAD to NADH. The reduced NADH is then exchanged with the second NAD, and the thioester is attacked by a nucleophilic inorganic phosphate to produce BPG. This chain is Glyceraldehyde-3-phosphate dehydrogenase (gap), found in Clostridium pasteurianum.